The primary structure comprises 346 residues: Ephrin-B1 (346 aa).

A signal peptide spans 1 to 27 (MARPGQRWLGKWLVAMVVWALCRLATP). Residues 28-237 (LAKNLEPVSW…GDPDGFFNSK (210 aa)) are Extracellular-facing. The 135-residue stretch at 30 to 164 (KNLEPVSWSS…TRTMKIIMKV (135 aa)) folds into the Ephrin RBD domain. 2 disulfides stabilise this stretch: C64–C101 and C89–C153. A glycan (N-linked (GlcNAc...) asparagine) is linked at N139. Residues 169-228 (NAVTPEQLTTSRPSKEADNTVKMATQAPGSRGSLGDSDGKHETVNQEEKSGPGASGGSSG) form a disordered region. Basic and acidic residues predominate over residues 205–218 (SDGKHETVNQEEKS). The helical transmembrane segment at 238–258 (VALFAAVGAGCVIFLLIIIFL) threads the bilayer. Residues 259–346 (TVLLLKLRKR…QSPANIYYKV (88 aa)) are Cytoplasmic-facing. Residues 260-273 (VLLLKLRKRHRKHT) carry the Nuclear localization signal motif. The tract at residues 263-294 (LKLRKRHRKHTQQRAAALSLSTLASPKGGSGT) is interaction with ZHX2. A phosphoserine mark is found at S281 and S287. A PDZ-binding motif is present at residues 344 to 346 (YKV).

The protein belongs to the ephrin family. As to quaternary structure, interacts (via PDZ-binding motif) with GRIP1 and GRIP2 (via PDZ domain 6). Interacts with TLE1. The intracellular domain peptide interacts with ZHX2; the interaction enhances ZHX2 transcriptional repression activity. Post-translationally, inducible phosphorylation of tyrosine residues in the cytoplasmic domain. In terms of processing, proteolytically processed. The ectodomain is cleaved, probably by a metalloprotease, to produce a membrane-tethered C-terminal fragment. This fragment is then further processed by the gamma-secretase complex to yield a soluble intracellular domain peptide which can translocate to the nucleus. The intracellular domain peptide is highly labile suggesting that it is targeted for degradation by the proteasome. Widely expressed. Detected in both neuronal and non-neuronal tissues. Seems to have particularly strong expression in retina, sciatic nerve, heart and spinal cord.

The protein localises to the cell membrane. Its subcellular location is the membrane raft. It is found in the nucleus. Functionally, cell surface transmembrane ligand for Eph receptors, a family of receptor tyrosine kinases which are crucial for migration, repulsion and adhesion during neuronal, vascular and epithelial development. Binding to Eph receptors residing on adjacent cells leads to contact-dependent bidirectional signaling into neighboring cells. Shows high affinity for the receptor tyrosine kinase EPHB1/ELK. Can also bind EPHB2 and EPHB3. Binds to, and induces collapse of, commissural axons/growth cones in vitro. May play a role in constraining the orientation of longitudinally projecting axons. The chain is Ephrin-B1 (EFNB1) from Homo sapiens (Human).